The primary structure comprises 260 residues: 5-oxoprolinase subunit A 2 (260 aa).

It belongs to the LamB/PxpA family. In terms of assembly, forms a complex composed of PxpA, PxpB and PxpC.

The catalysed reaction is 5-oxo-L-proline + ATP + 2 H2O = L-glutamate + ADP + phosphate + H(+). Functionally, catalyzes the cleavage of 5-oxoproline to form L-glutamate coupled to the hydrolysis of ATP to ADP and inorganic phosphate. This is 5-oxoprolinase subunit A 2 from Ralstonia nicotianae (strain ATCC BAA-1114 / GMI1000) (Ralstonia solanacearum).